The chain runs to 355 residues: MAGIKHRRDSAESINTDIITLSRFILDQQHLSAKNATGEFSMLLNSLQFAFKFISQTIRRAELVNLIGLAGASNSTGDQQKKLDVLGDEIFINAMKASGNVKVLVSEEQEDLIVFRNSPGKYAVCCDPIDGSSNLDAGVSVGTIVSLFKIHENQNGNSGEEDSEGTINDVARCGREMVAACYTMYGASTHLVLTTGAGVNGFTLDNNLGEFILTYPELRLPEQKSIYSINEGNTCYWEPTIADFIAKLKENSEENNGKPYSARYIGSMVADVHRTLLYGGLFSYPGDKKNPNGKLRLLYEAFPMAFLVEQAGGKAVNDRGERILDLVPQHIHDKSSIWLGSSGDVDKYLKHIGKL.

AMP is bound by residues 25–30 and 37–41; these read ILDQQH and TGEFS. Positions 78 and 107 each coordinate Mg(2+). Residue 121–122 participates in AMP binding; that stretch reads KY. The Mg(2+) site is built by D127, I129, and D130. 130-133 lines the substrate pocket; sequence DGSS. Position 149 (K149) interacts with AMP. Residues 230-233, 263-268, Y284, and 294-296 each bind substrate; these read NEGN, RYIGSM, and KLR. E300 lines the Mg(2+) pocket.

The protein belongs to the FBPase class 1 family. As to quaternary structure, homotetramer. Requires Mg(2+) as cofactor.

The enzyme catalyses beta-D-fructose 1,6-bisphosphate + H2O = beta-D-fructose 6-phosphate + phosphate. The protein operates within carbohydrate biosynthesis; gluconeogenesis. Its activity is regulated as follows. Subject to complex allosteric regulation. The enzyme can assume an active R-state, or an inactive T-state. Intermediate conformations may exist. AMP acts as allosteric inhibitor. AMP binding affects the turnover of bound substrate and not the affinity for substrate. This chain is Fructose-1,6-bisphosphatase (FBP1), found in Kluyveromyces lactis (strain ATCC 8585 / CBS 2359 / DSM 70799 / NBRC 1267 / NRRL Y-1140 / WM37) (Yeast).